The primary structure comprises 430 residues: Tol-Pal system protein TolB (430 aa).

A signal peptide spans 1 to 21 (MKQALRVAFGFLMLWAAVLHA).

It belongs to the TolB family. The Tol-Pal system is composed of five core proteins: the inner membrane proteins TolA, TolQ and TolR, the periplasmic protein TolB and the outer membrane protein Pal. They form a network linking the inner and outer membranes and the peptidoglycan layer.

It localises to the periplasm. Its function is as follows. Part of the Tol-Pal system, which plays a role in outer membrane invagination during cell division and is important for maintaining outer membrane integrity. TolB occupies a key intermediary position in the Tol-Pal system because it communicates directly with both membrane-embedded components, Pal in the outer membrane and TolA in the inner membrane. The sequence is that of Tol-Pal system protein TolB from Salmonella choleraesuis (strain SC-B67).